The chain runs to 330 residues: Aspartate--ammonia ligase (330 aa).

It belongs to the class-II aminoacyl-tRNA synthetase family. AsnA subfamily.

Its subcellular location is the cytoplasm. It catalyses the reaction L-aspartate + NH4(+) + ATP = L-asparagine + AMP + diphosphate + H(+). Its pathway is amino-acid biosynthesis; L-asparagine biosynthesis; L-asparagine from L-aspartate (ammonia route): step 1/1. In Escherichia coli O17:K52:H18 (strain UMN026 / ExPEC), this protein is Aspartate--ammonia ligase.